The primary structure comprises 280 residues: Homeobox protein SMOX-1 (280 aa).

Residues proline 61–serine 88 form a disordered region. Positions asparagine 69–aspartate 85 are enriched in low complexity. The short motif at valine 214–asparagine 219 is the Antp-type hexapeptide element. The segment at residues glutamine 229–arginine 280 is a DNA-binding region (homeobox).

Belongs to the Antp homeobox family.

The protein resides in the nucleus. The chain is Homeobox protein SMOX-1 (SMOX-1) from Schistosoma mansoni (Blood fluke).